Reading from the N-terminus, the 123-residue chain is UPF0102 protein CLD_2200 (123 aa).

Belongs to the UPF0102 family.

The chain is UPF0102 protein CLD_2200 from Clostridium botulinum (strain Okra / Type B1).